The sequence spans 426 residues: MSIQLPRGTQDILPDDAAIWQYIEQVAKETCETYHYQEIRTPIFEHTEIFSRGVGDTTDIVQKEMYTFSDRGGRSLTLRPEGTAAVVRSYVNHKLYASPAQPTKLYYTGPMFRYERPQAGRMRQFVQFGVEALGSASPQLDAEVLALLIAICKKLGLVNLKLVINSLGDSESRQAHREALIAHFKPSIDEFCSDCQMRLEKNPLRILDCKKDREHPLMATAPSILDYLNEESRAYFQSLKETLDLLNIPYVVDPTLVRGLDYYNHTAFELLSTAPGFGAITTLCGGGRYNGLVQEFGGPETPGIGFAFSIERFILAMKAENVDLPVPQSLDAYVVTLGDEASRLGPQLLQRLRDGGIRADKDYLGKKMKAQLKAADRYQASYTIIIGEDEIAKQQALVKQMATGEQTVVAISDLTSFLQEQIRGGN.

It belongs to the class-II aminoacyl-tRNA synthetase family. Homodimer.

The protein localises to the cytoplasm. It catalyses the reaction tRNA(His) + L-histidine + ATP = L-histidyl-tRNA(His) + AMP + diphosphate + H(+). The sequence is that of Histidine--tRNA ligase 1 from Shouchella clausii (strain KSM-K16) (Alkalihalobacillus clausii).